Reading from the N-terminus, the 943-residue chain is UvrABC system protein A (943 aa).

32–39 (GLSGSGKS) is a binding site for ATP. Residues 251-278 (CPVCGFTVPELEPRLFSFNAPFGSCPTC) form a C4-type zinc finger. ABC transporter domains are found at residues 308 to 589 (WNPI…KKSI) and 609 to 937 (GSGR…QYLK). ATP is bound at residue 641–648 (GVSGSGKS). The C4-type zinc finger occupies 740–766 (CEACSGDGIIKIEMHFLPDVYVPCEVC).

Belongs to the ABC transporter superfamily. UvrA family. In terms of assembly, forms a heterotetramer with UvrB during the search for lesions.

It localises to the cytoplasm. Its function is as follows. The UvrABC repair system catalyzes the recognition and processing of DNA lesions. UvrA is an ATPase and a DNA-binding protein. A damage recognition complex composed of 2 UvrA and 2 UvrB subunits scans DNA for abnormalities. When the presence of a lesion has been verified by UvrB, the UvrA molecules dissociate. This chain is UvrABC system protein A, found in Streptococcus mutans serotype c (strain ATCC 700610 / UA159).